The sequence spans 630 residues: E3 ubiquitin-protein ligase TRIM41 (630 aa).

The segment at 20–61 adopts an RING-type; degenerate zinc-finger fold; that stretch reads CAICLDYFTDPVSIGCGHNFCRVCVTQLWGGEDEEDRDELDR. The segment covering 51–75 has biased composition (acidic residues); that stretch reads EDEEDRDELDREEEEEEVGEEEEVE. Disordered stretches follow at residues 51 to 97 and 148 to 176; these read EDEE…GDME and EDEDEEEEVLEEDEEEELDPITQLPPPPA. Position 85 is a phosphothreonine (Thr-85). The span at 148 to 166 shows a compositional bias: acidic residues; it reads EDEDEEEEVLEEDEEEELD. The B box-type zinc finger occupies 222-263; that stretch reads NEQGICPRHQEALKLFCEVDEEAICVVCRESRSHKQHSVVPL. Positions 227, 230, 249, and 255 each coordinate Zn(2+). Lys-256 participates in a covalent cross-link: Glycyl lysine isopeptide (Lys-Gly) (interchain with G-Cter in SUMO2). Residues 281–374 adopt a coiled-coil conformation; sequence LRKHLEAVQK…AEAQERSQQG (94 aa). The 218-residue stretch at 413–630 folds into the B30.2/SPRY domain; it reads LTDAIVRKMS…SKGTRIKLCP (218 aa). The residue at position 447 (Ser-447) is a Phosphoserine. Residues 503–535 form a disordered region; the sequence is ARESTHHKEKVGSGGSSVSSGDASSSRHHHRRR.

The protein belongs to the TRIM/RBCC family. As to quaternary structure, interacts with PRKCA. Interacts with NOD2. Interacts with TRIM17; this interaction prevents TRIM41 activity on ZSCAN2. In terms of processing, auto-ubiquitinated.

The protein resides in the cytoplasm. The protein localises to the nucleus. It carries out the reaction S-ubiquitinyl-[E2 ubiquitin-conjugating enzyme]-L-cysteine + [acceptor protein]-L-lysine = [E2 ubiquitin-conjugating enzyme]-L-cysteine + N(6)-ubiquitinyl-[acceptor protein]-L-lysine.. It functions in the pathway protein modification; protein ubiquitination. In terms of biological role, E3 ligase that plays essential roles in innate antiviral response. Directly binds to influenza A virus or vesicular stomatitis virus nucleoproteins and targets them for ubiquitination and proteasomal degradation, thereby limiting viral infections. Activates the innate antiviral response by catalyzing monoubiquitination of CGAS, thereby activating CGAS. Also involved in innate antiviral response by mediating 'Lys-63'-linked polyubiquitylation of BCL10 which in turn hubs NEMO for activation of NF-kappa-B and IRF3 pathways. Catalyzes the ubiquitin-mediated degradation of other substrates including protein kinase C, ZSCAN21 or TOP3B suggesting additional roles besides its function in immune response. In Mus musculus (Mouse), this protein is E3 ubiquitin-protein ligase TRIM41.